A 1132-amino-acid chain; its full sequence is Protein sel-1 homolog 3 (1132 aa).

Residues 1–24 (MQRRGAGLGWPRQQQQQPPPLAVG) form a disordered region. N-linked (GlcNAc...) asparagine glycosylation is found at Asn201, Asn382, and Asn527. 7 Sel1-like repeats span residues 575-609 (YLAV…RLSS), 611-647 (NLGY…DQHT), 694-730 (RLAQ…PALI), 732-767 (DYAI…QAVN), 768-800 (GLGW…DASY), 801-839 (NLGV…EGTL), and 840-877 (WCSL…LGHV). Ser608 is subject to Phosphoserine. N-linked (GlcNAc...) asparagine glycosylation occurs at Asn937. The stretch at 952-988 (KMGDLYYYGHQNQSQDLELSVQMYAQAALDGDSQGFF) is one Sel1-like 8 repeat. Residues 1057-1077 (ILHSALIYFLGTFLLSILIAW) traverse the membrane as a helical segment. The tract at residues 1087-1132 (ASDPPPRPSQASPDTATSTASPAVTPAADASDQDQPTVTNNPEPRG) is disordered. A compositionally biased stretch (low complexity) spans 1097–1116 (ASPDTATSTASPAVTPAADA). Over residues 1119-1132 (QDQPTVTNNPEPRG) the composition is skewed to polar residues.

Its subcellular location is the membrane. The sequence is that of Protein sel-1 homolog 3 (SEL1L3) from Homo sapiens (Human).